A 396-amino-acid chain; its full sequence is Odorant receptor 49a (396 aa).

Residues 1–6 (MEKLRS) lie on the Cytoplasmic side of the membrane. Residues 7 to 27 (YEDFIFMANMMFKTLGYDLFH) form a helical membrane-spanning segment. The Extracellular portion of the chain corresponds to 28-34 (TPKPWWR). A helical membrane pass occupies residues 35–55 (YLLVRGYFVLCTISNFYEASM). The Cytoplasmic portion of the chain corresponds to 56 to 70 (VTTRIIEWESLAGSP). The chain crosses the membrane as a helical span at residues 71-91 (SKIMRQGLHFFYMLSSQLKFI). The Extracellular portion of the chain corresponds to 92–141 (TFMINRKRLLQLSHRLKELYPHKEQNQRKYEVNKYYLSCSTRNVLYVYYF). A helical membrane pass occupies residues 142–162 (VMVVMALEPLVQSCIMYLIGF). Over 163–209 (GKADFTYKRIFPTRLTFDSEKPLGYVLAYVIDFTYSQFIVNVSLGTD) the chain is Cytoplasmic. A helical transmembrane segment spans residues 210-230 (LWMMCVSSQISMHLGYLANML). The Extracellular segment spans residues 231 to 266 (ASIRPSPETEQQDCDFLASIIKRHQLMIRLQKDVNY). Residues 267–287 (VFGLLLASNLFTTSCLLCCMA) form a helical membrane-spanning segment. The Cytoplasmic portion of the chain corresponds to 288–296 (YYTVVEGFN). A helical membrane pass occupies residues 297–317 (WEGISYMMLFASVAAQFYVVS). Topologically, residues 318-396 (SHGQMLIDLS…FAVIRQTVEK (79 aa)) are extracellular.

The protein belongs to the insect chemoreceptor superfamily. Heteromeric odorant receptor channel (TC 1.A.69) family. Or49a subfamily. In terms of assembly, interacts with Orco. Complexes exist early in the endomembrane system in olfactory sensory neurons (OSNs), coupling these complexes to the conserved ciliary trafficking pathway.

It is found in the cell membrane. Its function is as follows. Odorant receptor which mediates acceptance or avoidance behavior, depending on its substrates. The odorant receptor repertoire encodes a large collection of odor stimuli that vary widely in identity, intensity, and duration. May form a complex with Orco to form odorant-sensing units, providing sensitive and prolonged odorant signaling and calcium permeability. Involved in the behavioral responses to butanol and 2-heptanone. The sequence is that of Odorant receptor 49a (Or49a) from Drosophila melanogaster (Fruit fly).